Here is a 297-residue protein sequence, read N- to C-terminus: Manganese efflux system protein MneP (297 aa).

Transmembrane regions (helical) follow at residues 12 to 32, 43 to 63, 85 to 105, 111 to 131, 155 to 175, and 177 to 197; these read VALI…FFGL, GIHS…IGIS, IVGI…ILSF, VPQY…EILY, GDIV…IGNS, and GWSY…YLIF.

The protein belongs to the cation diffusion facilitator (CDF) transporter (TC 2.A.4) family.

Its subcellular location is the cell membrane. Functionally, primary efflux pump for manganese. May prevent manganese intoxication. The protein is Manganese efflux system protein MneP of Bacillus subtilis (strain 168).